Here is a 197-residue protein sequence, read N- to C-terminus: Imidazoleglycerol-phosphate dehydratase (197 aa).

Belongs to the imidazoleglycerol-phosphate dehydratase family.

The protein resides in the cytoplasm. It catalyses the reaction D-erythro-1-(imidazol-4-yl)glycerol 3-phosphate = 3-(imidazol-4-yl)-2-oxopropyl phosphate + H2O. The protein operates within amino-acid biosynthesis; L-histidine biosynthesis; L-histidine from 5-phospho-alpha-D-ribose 1-diphosphate: step 6/9. The sequence is that of Imidazoleglycerol-phosphate dehydratase from Leptospira biflexa serovar Patoc (strain Patoc 1 / Ames).